A 359-amino-acid chain; its full sequence is Cytochrome c oxidase subunit 2 (359 aa).

The signal sequence occupies residues methionine 1–glycine 28. Cysteine 29 is lipidated: N-palmitoyl cysteine. The S-diacylglycerol cysteine moiety is linked to residue cysteine 29. Transmembrane regions (helical) follow at residues valine 64–phenylalanine 84 and valine 107–phenylalanine 127. Residues histidine 244, cysteine 285, glutamate 287, cysteine 289, histidine 293, and methionine 296 each contribute to the Cu cation site. Residues serine 338–alanine 359 form a disordered region.

It belongs to the cytochrome c oxidase subunit 2 family. Associates with subunits I, III and IV to form cytochrome c oxidase. The cofactor is binuclear copper center (CuA).

The protein resides in the cell membrane. The enzyme catalyses 4 Fe(II)-[cytochrome c] + O2 + 8 H(+)(in) = 4 Fe(III)-[cytochrome c] + 2 H2O + 4 H(+)(out). Subunits I and II form the functional core of the enzyme complex. Electrons originating in cytochrome c are transferred via heme a and Cu(A) to the binuclear center formed by heme a3 and Cu(B). This chain is Cytochrome c oxidase subunit 2 (ctaC), found in Corynebacterium efficiens (strain DSM 44549 / YS-314 / AJ 12310 / JCM 11189 / NBRC 100395).